A 448-amino-acid polypeptide reads, in one-letter code: MGRMFGTDGVRGIANKELTAELAYRLGRAGAYVLTNETHKPKILVGMDTRISGDMLEAALVSGILSVGAEAVCVGIVPTPAVAYLTRKYKADAGVVISASHNPVEYNGIKFFDAKGYKLSDNLEDEIQKIIESDFEGVPLPTGESVGRKVVEESAEEDYIKFAKSTIGTDLKGMKIALDCANGAAYKTAVKTFRELGAQVTVINNDPDGININCNCGSTHPEELMDYVVKKNCDLGLAFDGDADRCLAVDEKGNLIDGDFIMAICGKYLKDKGELHKDVVVVTVMSNMGLFLALDKANIKTVKTKVGDRYVLEEMLKEGYKLGGEQSGHIIFLDYNTTGDGLVTALKICSIVKESRKTLSKLASIMHKLPQVLANAKVPNNKKDIYLEDKEISDEIKKIEEELHGKGRVLIRPSGTEPLVRVMLEGEDQDRLNTLAHGLAELIEKKAN.

Serine 100 (phosphoserine intermediate) is an active-site residue. The Mg(2+) site is built by serine 100, aspartate 240, aspartate 242, and aspartate 244. Residue serine 100 is modified to Phosphoserine.

It belongs to the phosphohexose mutase family. Requires Mg(2+) as cofactor. Post-translationally, activated by phosphorylation.

The enzyme catalyses alpha-D-glucosamine 1-phosphate = D-glucosamine 6-phosphate. Functionally, catalyzes the conversion of glucosamine-6-phosphate to glucosamine-1-phosphate. The chain is Phosphoglucosamine mutase from Clostridium acetobutylicum (strain ATCC 824 / DSM 792 / JCM 1419 / IAM 19013 / LMG 5710 / NBRC 13948 / NRRL B-527 / VKM B-1787 / 2291 / W).